A 692-amino-acid chain; its full sequence is Formate hydrogenlyase transcriptional activator FhlA (692 aa).

The GAF domain maps to 202–344 (DMDELVSEVA…QIAERVAIAV (143 aa)). Residues 381-610 (IIGRSEAMYS…LENVIERAVL (230 aa)) form the Sigma-54 factor interaction domain. ATP is bound by residues 409–416 (GETGTGKE) and 472–481 (ADKSSLFLDE). Residues 663-682 (PKGAAQRLGLKRTTLLSRMK) constitute a DNA-binding region (H-T-H motif).

Required for induction of expression of the formate dehydrogenase H and hydrogenase-3 structural genes. Also activates expression of hyf operon (encodes the silent hydrogenase-4 gene cluster). In Escherichia coli (strain K12), this protein is Formate hydrogenlyase transcriptional activator FhlA (fhlA).